Consider the following 711-residue polypeptide: 1,4-alpha-glucan-branching enzyme (711 aa).

Residues Trp-98 and Lys-135 each contribute to the (1,4-alpha-D-glucosyl)n site. The active-site Nucleophile is the Asp-353. The Proton donor role is filled by Glu-414.

Belongs to the glycosyl hydrolase 13 family. GlgB subfamily.

The protein localises to the cytoplasm. The enzyme catalyses Transfers a segment of a (1-&gt;4)-alpha-D-glucan chain to a primary hydroxy group in a similar glucan chain.. The protein operates within glycan biosynthesis; glycogen biosynthesis. Its function is as follows. Glycogen-branching enzyme participates in the glycogen biosynthetic process along with glycogenin and glycogen synthase. Generates alpha-1,6-glucosidic branches from alpha-1,4-linked glucose chains, to increase solubility of the glycogen polymer. This Debaryomyces hansenii (strain ATCC 36239 / CBS 767 / BCRC 21394 / JCM 1990 / NBRC 0083 / IGC 2968) (Yeast) protein is 1,4-alpha-glucan-branching enzyme (GLC3).